The primary structure comprises 262 residues: Cytochrome b mRNA maturase bI2 (262 aa).

This sequence belongs to the LAGLIDADG endonuclease family.

The protein localises to the mitochondrion. This protein is responsible for splicing and maturation of cytochrome b mRNA. Specifically, it may be responsible for the splicing specificity of the second intron. The chain is Cytochrome b mRNA maturase bI2 (bI2) from Debaryomyces hansenii (strain ATCC 36239 / CBS 767 / BCRC 21394 / JCM 1990 / NBRC 0083 / IGC 2968) (Yeast).